The chain runs to 108 residues: ER membrane protein complex subunit 6 (108 aa).

3 helical membrane-spanning segments follow: residues 21 to 41, 45 to 65, and 86 to 106; these read VVSF…GILG, YEGL…LFAL, and ILDG…LVYV.

This sequence belongs to the EMC6 family.

The protein resides in the endoplasmic reticulum membrane. In Schizosaccharomyces pombe (strain 972 / ATCC 24843) (Fission yeast), this protein is ER membrane protein complex subunit 6.